The following is a 318-amino-acid chain: Methionyl-tRNA formyltransferase (318 aa).

A (6S)-5,6,7,8-tetrahydrofolate-binding site is contributed by S112–P115.

It belongs to the Fmt family.

The enzyme catalyses L-methionyl-tRNA(fMet) + (6R)-10-formyltetrahydrofolate = N-formyl-L-methionyl-tRNA(fMet) + (6S)-5,6,7,8-tetrahydrofolate + H(+). Its function is as follows. Attaches a formyl group to the free amino group of methionyl-tRNA(fMet). The formyl group appears to play a dual role in the initiator identity of N-formylmethionyl-tRNA by promoting its recognition by IF2 and preventing the misappropriation of this tRNA by the elongation apparatus. This is Methionyl-tRNA formyltransferase from Shewanella frigidimarina (strain NCIMB 400).